We begin with the raw amino-acid sequence, 171 residues long: 3-hydroxydecanoyl-[acyl-carrier-protein] dehydratase (171 aa).

H70 is an active-site residue.

Belongs to the thioester dehydratase family. FabA subfamily. As to quaternary structure, homodimer.

It is found in the cytoplasm. It carries out the reaction a (3R)-hydroxyacyl-[ACP] = a (2E)-enoyl-[ACP] + H2O. It catalyses the reaction (3R)-hydroxydecanoyl-[ACP] = (2E)-decenoyl-[ACP] + H2O. The catalysed reaction is (2E)-decenoyl-[ACP] = (3Z)-decenoyl-[ACP]. It participates in lipid metabolism; fatty acid biosynthesis. In terms of biological role, necessary for the introduction of cis unsaturation into fatty acids. Catalyzes the dehydration of (3R)-3-hydroxydecanoyl-ACP to E-(2)-decenoyl-ACP and then its isomerization to Z-(3)-decenoyl-ACP. Can catalyze the dehydratase reaction for beta-hydroxyacyl-ACPs with saturated chain lengths up to 16:0, being most active on intermediate chain length. The sequence is that of 3-hydroxydecanoyl-[acyl-carrier-protein] dehydratase from Shewanella oneidensis (strain ATCC 700550 / JCM 31522 / CIP 106686 / LMG 19005 / NCIMB 14063 / MR-1).